The primary structure comprises 292 residues: Peroxisomal 2,4-dienoyl-CoA reductase SPS19 [(3E)-enoyl-CoA-producing] (292 aa).

NADP(+)-binding residues include Ile36, Asp85, and Lys145. Ser162 acts as the Proton donor in catalysis. Lys180 is an NADP(+) binding site. The active-site Lowers pKa of active site Tyr is Lys180. Lys188 is covalently cross-linked (Glycyl lysine isopeptide (Lys-Gly) (interchain with G-Cter in ubiquitin)). Ile209 serves as a coordination point for NADP(+). The short motif at 290-292 (SKL) is the Microbody targeting signal element.

The protein belongs to the short-chain dehydrogenases/reductases (SDR) family. In terms of assembly, homodimer.

The protein resides in the peroxisome. It catalyses the reaction a (2E,4Z)-dienoyl-CoA + NADPH + H(+) = a 4,5-saturated-(3E)-enoyl-CoA + NADP(+). The enzyme catalyses a (2E,4E)-dienoyl-CoA + NADPH + H(+) = a 4,5-saturated-(3E)-enoyl-CoA + NADP(+). Its function is as follows. Auxiliary enzyme of beta-oxidation. Participates in the degradation of unsaturated fatty enoyl-CoA esters having double bonds in both even- and odd-numbered positions in peroxisome. Catalyzes the NADP-dependent reduction of 2,4-dienoyl-CoA to yield trans-3-enoyl-CoA. Dispensable for growth and sporulation on solid acetate and oleate media, but is essential for these processes to occur on petroselineate. This chain is Peroxisomal 2,4-dienoyl-CoA reductase SPS19 [(3E)-enoyl-CoA-producing] (SPS19), found in Saccharomyces cerevisiae (strain ATCC 204508 / S288c) (Baker's yeast).